Reading from the N-terminus, the 307-residue chain is Elongation factor Ts (307 aa).

The segment at 80 to 83 (TDFV) is involved in Mg(2+) ion dislocation from EF-Tu.

It belongs to the EF-Ts family.

It localises to the cytoplasm. In terms of biological role, associates with the EF-Tu.GDP complex and induces the exchange of GDP to GTP. It remains bound to the aminoacyl-tRNA.EF-Tu.GTP complex up to the GTP hydrolysis stage on the ribosome. The protein is Elongation factor Ts of Clostridium botulinum (strain 657 / Type Ba4).